Reading from the N-terminus, the 568-residue chain is MFS-type efflux transporter phmH (568 aa).

The span at 1–11 shows a compositional bias: polar residues; that stretch reads MVSGTDTTEVG. The disordered stretch occupies residues 1–39; it reads MVSGTDTTEVGATTKAPPSEGTEGILDDHSSNSQPQAEK. The next 7 helical transmembrane spans lie at 45–65, 101–121, 134–154, 161–181, 199–219, 237–257, and 268–288; these read YPLSFWLAFLGLCCTGLVSAL, YVMIGATIIFILGSGLCGGSS, GIGAGGINMLIDMIICDLVPM, IGLLFLFVSLGATIGPFVGGI, IFYINLPFGGVALLLLILFLH, VIGNSILIGATFAILYALTYG, and IAAPLTIGLVGLVAAFFWEMS. A glycan (N-linked (GlcNAc...) asparagine) is linked at N303. 6 consecutive transmembrane segments (helical) span residues 307 to 327, 344 to 364, 372 to 392, 399 to 419, 437 to 457, and 515 to 535; these read AAAFFISFMCMLLAFWINFFY, VYTLPRAIAFPLFAAVGGAIV, TVHLVSTGIMPLVMGLSSILD, EWVIWQLLFGVSGGMMISTTL, TWSFVRSLGTIWGLSIPAAIF, and IGIVFGGVTFLSVFFEKEIHL. N563 carries an N-linked (GlcNAc...) asparagine glycan.

It belongs to the major facilitator superfamily.

It localises to the cell membrane. In terms of biological role, MFS-type efflux transporter; part of the gene cluster that mediates the biosynthesis of thethe mycotoxins phomacins, leucine-derived cytochalasans with potent actin polymerization-inhibitory activities and monocot-specific antigerminative activities. PhmH might be involved in the excretion of phomacins. The chain is MFS-type efflux transporter phmH from Phaeosphaeria nodorum (strain SN15 / ATCC MYA-4574 / FGSC 10173) (Glume blotch fungus).